Consider the following 172-residue polypeptide: C-phycocyanin beta subunit (172 aa).

N72 carries the post-translational modification N4-methylasparagine. (2R,3E)-phycocyanobilin-binding residues include C82 and C153.

Belongs to the phycobiliprotein family. The alpha and beta subunits exhibit high affinity for one another and form heterodimers. These heterodimers form heterohexamers of 3 alpha and 3 beta subunits which, in turn, aggregate into a heterododecamer consisting of 2 heterohexamers. In terms of processing, contains two covalently linked bilin chromophores.

The protein resides in the cellular thylakoid membrane. In terms of biological role, light-harvesting photosynthetic bile pigment-protein from the phycobiliprotein complex (phycobilisome, PBS). Phycocyanin is the major phycobiliprotein in the PBS rod. This chain is C-phycocyanin beta subunit (cpcB), found in Arthrospira platensis (Spirulina platensis).